The chain runs to 486 residues: E3 ubiquitin-protein ligase RNF8 (486 aa).

In terms of domain architecture, FHA spans 38–92; it reads VTVGRGFGVTYQLVSKICPLMISRNHCVLKQNPEGQWTIMDNKSLNGVWLNRARL. The segment at 68-72 is required for interaction with PIWIL1; it reads QNPEG. S157 is subject to Phosphoserine. Over residues 180–201 the composition is skewed to polar residues; that stretch reads SCESGQSVKSQGKGEVSSTPSE. The disordered stretch occupies residues 180-207; that stretch reads SCESGQSVKSQGKGEVSSTPSENLDPKL. Residues 404 to 442 form an RING-type zinc finger; that stretch reads CIICSEYFIEAVTLNCAHSFCSYCINEWMKRKIECPICR.

It belongs to the RNF8 family. In terms of assembly, homodimer. Forms a E2-E3 ubiquitin ligase complex composed of the RNF8 homodimer and a E2 heterodimer of UBE2N and UBE2V2. Interacts with class III E2s, including UBE2E1, UBE2E2, and UBE2E3 and with UBE2N. Interacts with RXRA. Interacts (via FHA domain) with phosphorylated HERC2 (via C-terminus). Interacts with PIWIL1; leading to sequester RNF8 in the cytoplasm. Interacts with WRAP53/TCAB1. Autoubiquitinated through 'Lys-48' and 'Lys-63' of ubiquitin. 'Lys-63' polyubiquitination is mediated by UBE2N. 'Lys-29'-type polyubiquitination is also observed, but it doesn't require its own functional RING-type zinc finger.

It localises to the nucleus. Its subcellular location is the cytoplasm. It is found in the midbody. The protein resides in the chromosome. The protein localises to the telomere. The enzyme catalyses S-ubiquitinyl-[E2 ubiquitin-conjugating enzyme]-L-cysteine + [acceptor protein]-L-lysine = [E2 ubiquitin-conjugating enzyme]-L-cysteine + N(6)-ubiquitinyl-[acceptor protein]-L-lysine.. It participates in protein modification; protein ubiquitination. Its function is as follows. E3 ubiquitin-protein ligase that plays a key role in DNA damage signaling via 2 distinct roles: by mediating the 'Lys-63'-linked ubiquitination of histones H2A and H2AX and promoting the recruitment of DNA repair proteins at double-strand breaks (DSBs) sites, and by catalyzing 'Lys-48'-linked ubiquitination to remove target proteins from DNA damage sites. Following DNA DSBs, it is recruited to the sites of damage by ATM-phosphorylated MDC1 and catalyzes the 'Lys-63'-linked ubiquitination of histones H2A and H2AX, thereby promoting the formation of TP53BP1 and BRCA1 ionizing radiation-induced foci (IRIF). Also controls the recruitment of UIMC1-BRCC3 (RAP80-BRCC36) and PAXIP1/PTIP to DNA damage sites. Promotes the recruitment of NBN to DNA damage sites by catalyzing 'Lys-6'-linked ubiquitination of NBN. Also recruited at DNA interstrand cross-links (ICLs) sites and catalyzes 'Lys-63'-linked ubiquitination of histones H2A and H2AX, leading to recruitment of FAAP20 and Fanconi anemia (FA) complex, followed by interstrand cross-link repair. H2A ubiquitination also mediates the ATM-dependent transcriptional silencing at regions flanking DSBs in cis, a mechanism to avoid collision between transcription and repair intermediates. Promotes the formation of 'Lys-63'-linked polyubiquitin chains via interactions with the specific ubiquitin-conjugating UBE2N/UBC13 and ubiquitinates non-histone substrates such as PCNA. Substrates that are polyubiquitinated at 'Lys-63' are usually not targeted for degradation. Also catalyzes the formation of 'Lys-48'-linked polyubiquitin chains via interaction with the ubiquitin-conjugating UBE2L6/UBCH8, leading to degradation of substrate proteins such as CHEK2, JMJD2A/KDM4A and KU80/XRCC5: it is still unclear how the preference toward 'Lys-48'- versus 'Lys-63'-linked ubiquitination is regulated but it could be due to RNF8 ability to interact with specific E2 specific ligases. For instance, interaction with phosphorylated HERC2 promotes the association between RNF8 and UBE2N/UBC13 and favors the specific formation of 'Lys-63'-linked ubiquitin chains. Promotes non-homologous end joining (NHEJ) by promoting the 'Lys-48'-linked ubiquitination and degradation the of KU80/XRCC5. Following DNA damage, mediates the ubiquitination and degradation of JMJD2A/KDM4A in collaboration with RNF168, leading to unmask H4K20me2 mark and promote the recruitment of TP53BP1 at DNA damage sites. Following DNA damage, mediates the ubiquitination and degradation of POLD4/p12, a subunit of DNA polymerase delta. In the absence of POLD4, DNA polymerase delta complex exhibits higher proofreading activity. In addition to its function in damage signaling, also plays a role in higher-order chromatin structure by mediating extensive chromatin decondensation. Involved in the activation of ATM by promoting histone H2B ubiquitination, which indirectly triggers histone H4 'Lys-16' acetylation (H4K16ac), establishing a chromatin environment that promotes efficient activation of ATM kinase. Required in the testis, where it plays a role in the replacement of histones during spermatogenesis. At uncapped telomeres, promotes the joining of deprotected chromosome ends by inducing H2A ubiquitination and TP53BP1 recruitment, suggesting that it may enhance cancer development by aggravating telomere-induced genome instability in case of telomeric crisis. Promotes the assembly of RAD51 at DNA DSBs in the absence of BRCA1 and TP53BP1 Also involved in class switch recombination in immune system, via its role in regulation of DSBs repair. May be required for proper exit from mitosis after spindle checkpoint activation and may regulate cytokinesis. May play a role in the regulation of RXRA-mediated transcriptional activity. Not involved in RXRA ubiquitination by UBE2E2. The polypeptide is E3 ubiquitin-protein ligase RNF8 (Pongo abelii (Sumatran orangutan)).